The primary structure comprises 696 residues: MAEAPPRRLGLGPPPGDAPRAELVALTAVQSEQGEAGGGGSPRRLGLLGSPLPPGAPLPGPGSGSGSACGGQRSSAAQKRYRRLQNWVYNVLERPRGWAFVYHVFIFLLVFSCLVLSVLSTIQEHQELANECLLILEFVMIVVFGLEYIIRVWSAGCCCRYRGWQGRFRFARKPFCVIDFIVFVASVAVIAAGTQGNIFATSALRSMRFLQILRMVRMDRRGGTWKLLGSVVYAHSKELITAWYIGFLVLIFASFLVYLAEKDANSDFSSYADSLWWGTITLTTIGYGDKTPHTWLGRVLAAGFALLGISFFALPAGILGSGFALKVQEQHRQKHFEKRRMPAANLIQAAWRLYSTDTSRAYLTATWYYYDSILPSFRELALLFEHIQRARNGGLRPLEVRRAPVPDGAPSRYPPVATCHRPGSASFCPGESSRMGIKDRIRISSSQKRTGPSKQHLAPPPIPTSPSSEQVGEASSPSKVQKSWSFNDRTRFRASLRLKPRCSAEEGPSEEVAEEKSYQCELTVDDVMPAVKTVIRSVRILKFLVAKRKFKETLRPYDVKDVIEQYSAGHLDMLGRIKSLQARVDQIVGRGPGDRKTREKGDKGPSDTEAVDEISMMGRVVKVEKQVQSIEHKLDLLLGFYSRCLRSGTSASLGTVQVPLFDPDITSDYHSPVDHEDISVSAQTLSISRSVSTNMD.

The segment at Met1–Arg20 is disordered. Topologically, residues Met1–Gly97 are cytoplasmic. Residue Arg94 participates in a 1,2-diacyl-sn-glycero-3-phospho-(1D-myo-inositol-4,5-bisphosphate) binding. The chain crosses the membrane as a helical span at residues Trp98 to Leu119. The Extracellular portion of the chain corresponds to Ser120–Asn130. A helical transmembrane segment spans residues Glu131–Trp153. At Ser154–Arg169 the chain is on the cytoplasmic side. Residues Phe170–Ala192 form a helical membrane-spanning segment. Residue Lys173 coordinates a 1,2-diacyl-sn-glycero-3-phospho-(1D-myo-inositol-4,5-bisphosphate). The Extracellular portion of the chain corresponds to Gly193–Ala203. Residues Leu204–Thr224 form a helical; Voltage-sensor membrane-spanning segment. A 1,2-diacyl-sn-glycero-3-phospho-(1D-myo-inositol-4,5-bisphosphate) is bound by residues Arg220, Arg221, Lys226, and Ser236. The Cytoplasmic portion of the chain corresponds to Trp225–Ser236. The helical transmembrane segment at Lys237–Leu259 threads the bilayer. Topologically, residues Ala260–Tyr271 are extracellular. Residues Ala272–His293 constitute an intramembrane region (pore-forming). Thr294 is a topological domain (extracellular). The helical transmembrane segment at Trp295–Phe323 threads the bilayer. Residues Ala324–Asp696 are Cytoplasmic-facing. Residues His331 and Lys334 each coordinate a 1,2-diacyl-sn-glycero-3-phospho-(1D-myo-inositol-4,5-bisphosphate). The segment at Ala343–Arg352 is interaction with CALM. The disordered stretch occupies residues Ser445–Trp484. Residues Ser465 to Trp484 show a composition bias toward polar residues. The segment at Arg536–Phe550 is interaction with CALM. The tract at residues Lys547–Ala651 is C-terminal assembly domain (tetramerization). A disordered region spans residues Gly589–Glu609. A compositionally biased stretch (basic and acidic residues) spans Pro592 to Ser606. Positions Ala610–Leu645 form a coiled coil.

This sequence belongs to the potassium channel family. KQT (TC 1.A.1.15) subfamily. Kv7.4/KCNQ4 sub-subfamily. In terms of assembly, homotetramer. Interacts (via C-terminus) with calmodulin; forms a heterooctameric structure (with 4:4 KCNQ1:CALM stoichiometry); the interaction is calcium-independent, constitutive, participates in the proper assembly of a functional channel. The interaction with calcium-free CALM controls channel trafficking whereas interaction with calcium-bound CALM regulates channel gating. May form a functional heteromultimeric channel with KCNQ3. Interacts with HSP90AB1; promotes cell surface expression of KCNQ4. In the inner ear expressed in the outer sensory hair cells of the cochlea and in type I hair cells of the vestibular organs. Also expressed in the postsynaptic membrane of the calyx nerve endings innervating type I cells. In the brain expressed in neurons of many, but not all, nuclei of the central auditory pathway. Absent from most other brain regions.

Its subcellular location is the basal cell membrane. It carries out the reaction K(+)(in) = K(+)(out). With respect to regulation, two molecules of phosphatidylinositol-4,5-bisphosphate (PIP2-I and PIP2-II) are essential to activate KCNQ4 channel by inducing the coupling of the voltage-sensing domain (VSD) and the pore-forming domain (PD). Upon channel activation, PIP2-I and PIP2-II disrupt the VSD-calmodulin/CALM interaction, causing the release of CALM from the VSD which triggers the opening of the gate. Calcium suppresses KCNQ4 channel current through calcium-bound CALM C-terminus. Therefore CALM acts as calcium sensor that controls channel activity. Its function is as follows. Pore-forming subunit of the voltage-gated potassium (Kv) channel involved in the regulation of sensory cells excitability in the cochlea. KCNQ4/Kv7.4 channel is composed of 4 pore-forming subunits assembled as tetramers. Promotes the outflow of potassium ions in the repolarization phase of action potential which plays a role in regulating membrane potential of excitable cells. The channel conducts a slowly activating and deactivating current. Current often shows some inward rectification at positive potentials. Channel may be selectively permeable in vitro to other cations besides potassium, in decreasing order of affinity K(+) = Rb(+) &gt; Cs(+) &gt; Na(+). Important for normal physiological function of inner ear such as sensory perception of sound. This chain is Potassium voltage-gated channel subfamily KQT member 4, found in Mus musculus (Mouse).